The chain runs to 54 residues: MLHYAVVFLVIALIAALFGFGGIAAGAVGIAKILFFVFVIMAVVTFVLSLLKRG.

Transmembrane regions (helical) follow at residues 5-25 (AVVF…GIAA) and 28-48 (VGIA…TFVL).

It belongs to the UPF0391 family.

The protein localises to the cell membrane. This is UPF0391 membrane protein Aave_3864 from Paracidovorax citrulli (strain AAC00-1) (Acidovorax citrulli).